Reading from the N-terminus, the 154-residue chain is 6,7-dimethyl-8-ribityllumazine synthase (154 aa).

5-amino-6-(D-ribitylamino)uracil-binding positions include Phe22, 56 to 58 (AFE), and 80 to 82 (TVI). 85-86 (AT) is a binding site for (2S)-2-hydroxy-3-oxobutyl phosphate. The Proton donor role is filled by His88. Phe113 is a 5-amino-6-(D-ribitylamino)uracil binding site. (2S)-2-hydroxy-3-oxobutyl phosphate is bound at residue Arg127.

This sequence belongs to the DMRL synthase family. In terms of assembly, forms an icosahedral capsid composed of 60 subunits, arranged as a dodecamer of pentamers.

It carries out the reaction (2S)-2-hydroxy-3-oxobutyl phosphate + 5-amino-6-(D-ribitylamino)uracil = 6,7-dimethyl-8-(1-D-ribityl)lumazine + phosphate + 2 H2O + H(+). Its pathway is cofactor biosynthesis; riboflavin biosynthesis; riboflavin from 2-hydroxy-3-oxobutyl phosphate and 5-amino-6-(D-ribitylamino)uracil: step 1/2. Catalyzes the formation of 6,7-dimethyl-8-ribityllumazine by condensation of 5-amino-6-(D-ribitylamino)uracil with 3,4-dihydroxy-2-butanone 4-phosphate. This is the penultimate step in the biosynthesis of riboflavin. This chain is 6,7-dimethyl-8-ribityllumazine synthase, found in Bacillus licheniformis (strain ATCC 14580 / DSM 13 / JCM 2505 / CCUG 7422 / NBRC 12200 / NCIMB 9375 / NCTC 10341 / NRRL NRS-1264 / Gibson 46).